We begin with the raw amino-acid sequence, 330 residues long: Ferredoxin--NADP reductase (330 aa).

Residues E35, Q43, Y48, V90, F123, D285, and T326 each coordinate FAD.

The protein belongs to the ferredoxin--NADP reductase type 2 family. In terms of assembly, homodimer. Requires FAD as cofactor.

The catalysed reaction is 2 reduced [2Fe-2S]-[ferredoxin] + NADP(+) + H(+) = 2 oxidized [2Fe-2S]-[ferredoxin] + NADPH. The sequence is that of Ferredoxin--NADP reductase from Streptococcus pyogenes serotype M28 (strain MGAS6180).